We begin with the raw amino-acid sequence, 630 residues long: Coiled-coil domain-containing protein 120 (630 aa).

Residues 31–70 (RLRGLLDRQRTLQEALSLKLQELRKVCLQEAELTGQLPPE) form an involved in CYTH2-binding region. Residues 109 to 173 (ELALEALERE…LRDVRARLGL (65 aa)) are a coiled coil. 2 stretches are compositionally biased toward low complexity: residues 212–222 (HSESSSLSESG) and 282–297 (ASPT…SASS). Disordered regions lie at residues 212–435 (HSES…GAPR) and 457–534 (GGGT…NPLL). Over residues 326 to 335 (RQWSGSQDSQ) the composition is skewed to polar residues. Phosphoserine occurs at positions 358 and 360. The span at 421 to 434 (ARPSSAAPASRGAP) shows a compositional bias: low complexity. Arg-435 bears the Omega-N-methylarginine mark.

As to quaternary structure, interacts with NIN and CEP170; leading to recruit them to centrosomes. Directly interacts with CYTH2; this interaction stabilizes CCDC120, possibly by preventing ubiquitination. In terms of processing, ubiquitinated; interaction with CYTH2 may prevent ubiquitination.

Its subcellular location is the cytoplasm. It localises to the cytoskeleton. The protein localises to the microtubule organizing center. It is found in the centrosome. The protein resides in the centriole. Its subcellular location is the cell projection. It localises to the neuron projection. The protein localises to the growth cone. It is found in the endosome. Centriolar protein required for centriole subdistal appendage assembly and microtubule anchoring in interphase cells. Together with CCDC68, cooperate with subdistal appendage components ODF2, NIN and CEP170 for hierarchical subdistal appendage assembly. Recruits NIN and CEP170 to centrosomes. Also required for neurite growth. Localizes CYTH2 to vesicles to allow its transport along neurites, and subsequent ARF6 activation and neurite growth. This is Coiled-coil domain-containing protein 120 (CCDC120) from Homo sapiens (Human).